A 525-amino-acid chain; its full sequence is Lysine--tRNA ligase (525 aa).

A 'HIGH' region motif is present at residues 44–52 (PSGLPHIGT). The 'KMSKS' region motif lies at 290-294 (KISKS). Lys-293 is a binding site for ATP.

It belongs to the class-I aminoacyl-tRNA synthetase family.

The protein localises to the cytoplasm. The enzyme catalyses tRNA(Lys) + L-lysine + ATP = L-lysyl-tRNA(Lys) + AMP + diphosphate. The polypeptide is Lysine--tRNA ligase (Rickettsia felis (strain ATCC VR-1525 / URRWXCal2) (Rickettsia azadi)).